A 410-amino-acid polypeptide reads, in one-letter code: MDREDILKEFCNRNNIDVSQGRFFLESTNWNYELATALLHEVIPPEEDHGLQPSSDVSKVPEVTGSSSGISGGDQQPPRPLQRQQNTQGQGMKSGTASKKFATLRDLEGNDESAEEKSHLFTGGEKSGLSVEDGDPDPKKQLVRDILEKARQHTISPLDEQDSGPSSLASSWASVGQRLGTENEASGSTTPVTQSGPPRENPPTESQPEKPLRRTLYFWRNGFSVDDGPIYTYDDPANQEMLRYINSGRAPLHLLGVSMNQPIDVVVQHRMDEDYVAPFKPFSGKGQRLGSTYMQPRMSQMPGGLYTDTSTSSSVPINVKPNSTTPHASLQIDENKPTTRIQVRLSNGGRTVLTVNLSHTLHDIYEAVRAVSPGNFILSVPFPAKTLEDDPSVTVEAASLKNASLVQKSL.

Disordered stretches follow at residues 46 to 139 and 154 to 212; these read EEDH…PDPK and TISP…EKPL. Residues 65–85 show a composition bias toward low complexity; it reads GSSSGISGGDQQPPRPLQRQQ. The span at 86-97 shows a compositional bias: polar residues; sequence NTQGQGMKSGTA. Serine 156, serine 167, and serine 186 each carry phosphoserine. A compositionally biased stretch (low complexity) spans 163–174; it reads SGPSSLASSWAS. Residues 183–196 are compositionally biased toward polar residues; that stretch reads NEASGSTTPVTQSG. Position 190 is a phosphothreonine (threonine 190). Residues 211 to 276 enclose the SEP domain; it reads PLRRTLYFWR…VQHRMDEDYV (66 aa). The UBX domain occupies 334–410; sequence ENKPTTRIQV…KNASLVQKSL (77 aa).

As to quaternary structure, interacts with cdc48.

Involved in CDC48-dependent protein degradation through the ubiquitin/proteasome pathway. Involved in delivery of substrates to the 26S proteasome. Also required for membrane fusion and sporulation. In Schizosaccharomyces pombe (strain 972 / ATCC 24843) (Fission yeast), this protein is UBX domain-containing protein 3 (ubx3).